We begin with the raw amino-acid sequence, 83 residues long: uncharacterized protein (83 aa).

Belongs to the chlamydial CPn_0710/CT_666/TC_0037 family.

This is an uncharacterized protein from Chlamydia trachomatis serovar D (strain ATCC VR-885 / DSM 19411 / UW-3/Cx).